A 184-amino-acid polypeptide reads, in one-letter code: NADH-quinone oxidoreductase subunit B (184 aa).

[4Fe-4S] cluster is bound by residues Cys63, Cys64, Cys128, and Cys158.

The protein belongs to the complex I 20 kDa subunit family. NDH-1 is composed of 14 different subunits. Subunits NuoB, C, D, E, F, and G constitute the peripheral sector of the complex. The cofactor is [4Fe-4S] cluster.

It localises to the cell inner membrane. The enzyme catalyses a quinone + NADH + 5 H(+)(in) = a quinol + NAD(+) + 4 H(+)(out). NDH-1 shuttles electrons from NADH, via FMN and iron-sulfur (Fe-S) centers, to quinones in the respiratory chain. The immediate electron acceptor for the enzyme in this species is believed to be ubiquinone. Couples the redox reaction to proton translocation (for every two electrons transferred, four hydrogen ions are translocated across the cytoplasmic membrane), and thus conserves the redox energy in a proton gradient. The protein is NADH-quinone oxidoreductase subunit B of Xanthomonas axonopodis pv. citri (strain 306).